Here is a 66-residue protein sequence, read N- to C-terminus: Large ribosomal subunit protein uL29 (66 aa).

Belongs to the universal ribosomal protein uL29 family.

In Lysinibacillus sphaericus (strain C3-41), this protein is Large ribosomal subunit protein uL29.